We begin with the raw amino-acid sequence, 144 residues long: Phosphomevalonate dehydratase small subunit (144 aa).

Ser65 serves as the catalytic Proton acceptor.

It belongs to the AcnX type II small subunit family. Heterodimer composed of a large subunit (PMDh-L) and a small subunit (PMDh-S).

The catalysed reaction is (R)-5-phosphomevalonate = (2E)-3-methyl-5-phosphooxypent-2-enoate + H2O. It functions in the pathway isoprenoid biosynthesis; isopentenyl diphosphate biosynthesis via mevalonate pathway. Component of a hydro-lyase that catalyzes the dehydration of mevalonate 5-phosphate (MVA5P) to form trans-anhydromevalonate 5-phosphate (tAHMP). Involved in the archaeal mevalonate (MVA) pathway, which provides fundamental precursors for isoprenoid biosynthesis, such as isopentenyl diphosphate (IPP) and dimethylallyl diphosphate (DMAPP). The sequence is that of Phosphomevalonate dehydratase small subunit from Methanosarcina acetivorans (strain ATCC 35395 / DSM 2834 / JCM 12185 / C2A).